Consider the following 716-residue polypeptide: ATP-dependent DNA helicase DinG (716 aa).

The Helicase ATP-binding domain maps to 17–294 (ALQEQIPDFI…TCMEQFRPKT (278 aa)). Residue 54 to 61 (APTGVGKT) coordinates ATP. Cys120 lines the [4Fe-4S] cluster pocket. The DEAH box signature appears at 131-134 (EPTQ). Positions 194, 199, and 205 each coordinate [4Fe-4S] cluster. A DEAH box motif is present at residues 248–251 (DEGH). One can recognise a Helicase C-terminal domain in the interval 517–698 (HIAEMAAFFR…VFPIEQPEVP (182 aa)).

The protein belongs to the helicase family. DinG subfamily. Type 1 sub-subfamily. It depends on [4Fe-4S] cluster as a cofactor.

The catalysed reaction is Couples ATP hydrolysis with the unwinding of duplex DNA at the replication fork by translocating in the 5'-3' direction. This creates two antiparallel DNA single strands (ssDNA). The leading ssDNA polymer is the template for DNA polymerase III holoenzyme which synthesizes a continuous strand.. The enzyme catalyses ATP + H2O = ADP + phosphate + H(+). In terms of biological role, DNA-dependent ATPase and 5'-3' DNA helicase. Unwinds D-loops, R-loops, forked DNA and G-quadruplex DNA. This is ATP-dependent DNA helicase DinG from Escherichia coli O157:H7.